The sequence spans 364 residues: Uroporphyrinogen decarboxylase (364 aa).

8 residues coordinate coproporphyrinogen I: arginine 34, alanine 36, arginine 38, arginine 47, aspartate 83, tyrosine 161, serine 216, and histidine 336. Coproporphyrinogen III contacts are provided by arginine 34, alanine 36, and arginine 38. Aspartate 83, tyrosine 161, serine 216, and histidine 336 together coordinate coproporphyrinogen III.

It belongs to the uroporphyrinogen decarboxylase family. Homodimer.

It is found in the cytoplasm. The protein localises to the cytosol. The catalysed reaction is uroporphyrinogen III + 4 H(+) = coproporphyrinogen III + 4 CO2. The enzyme catalyses uroporphyrinogen I + 4 H(+) = coproporphyrinogen I + 4 CO2. It functions in the pathway porphyrin-containing compound metabolism; protoporphyrin-IX biosynthesis; coproporphyrinogen-III from 5-aminolevulinate: step 4/4. Its function is as follows. Catalyzes the sequential decarboxylation of the four acetate side chains of uroporphyrinogen to form coproporphyrinogen and participates in the fifth step in the heme biosynthetic pathway. Isomer I or isomer III of uroporphyrinogen may serve as substrate, but only coproporphyrinogen III can ultimately be converted to heme. In vitro also decarboxylates pentacarboxylate porphyrinogen I. The polypeptide is Uroporphyrinogen decarboxylase (Rattus norvegicus (Rat)).